A 196-amino-acid polypeptide reads, in one-letter code: 3-isopropylmalate dehydratase small subunit (196 aa).

The protein belongs to the LeuD family. LeuD type 1 subfamily. In terms of assembly, heterodimer of LeuC and LeuD.

The enzyme catalyses (2R,3S)-3-isopropylmalate = (2S)-2-isopropylmalate. It functions in the pathway amino-acid biosynthesis; L-leucine biosynthesis; L-leucine from 3-methyl-2-oxobutanoate: step 2/4. Its function is as follows. Catalyzes the isomerization between 2-isopropylmalate and 3-isopropylmalate, via the formation of 2-isopropylmaleate. This is 3-isopropylmalate dehydratase small subunit from Streptococcus thermophilus (strain CNRZ 1066).